Here is a 163-residue protein sequence, read N- to C-terminus: Cyclic pyranopterin monophosphate synthase (163 aa).

Substrate-binding positions include 79-81 and 118-119; these read LCH and ME. The active site involves aspartate 133.

It belongs to the MoaC family. Homohexamer; trimer of dimers.

It catalyses the reaction (8S)-3',8-cyclo-7,8-dihydroguanosine 5'-triphosphate = cyclic pyranopterin phosphate + diphosphate. It participates in cofactor biosynthesis; molybdopterin biosynthesis. Catalyzes the conversion of (8S)-3',8-cyclo-7,8-dihydroguanosine 5'-triphosphate to cyclic pyranopterin monophosphate (cPMP). This is Cyclic pyranopterin monophosphate synthase from Nocardioides sp. (strain ATCC BAA-499 / JS614).